A 615-amino-acid chain; its full sequence is Delta(14)-sterol reductase LBR (615 aa).

The Tudor domain occupies 1–62 (MPSRKFADGE…DIKPLTSFRQ (62 aa)). At 1-211 (MPSRKFADGE…IRAKDLEFGG (211 aa)) the chain is on the nuclear side. Positions 53–109 (DIKPLTSFRQRKGGSTSSSPSRRRGSRSRSRSRSPGRPPKSARRSASASHQADIKEA) are disordered. K55 carries the post-translational modification N6-acetyllysine. T58 is subject to Phosphothreonine. 2 positions are modified to phosphoserine: S59 and S67. A phosphoserine; by CDK1 mark is found at S71 and S86. Residues 73 to 86 (SRRRGSRSRSRSRS) show a composition bias toward basic residues. Phosphoserine occurs at positions 97 and 99. T118 bears the Phosphothreonine mark. S128 is subject to Phosphoserine. T200 is modified (phosphothreonine). The next 8 membrane-spanning stretches (helical) occupy residues 212-232 (VPGV…LLLM), 258-278 (VFGV…LPIG), 299-319 (FYAF…GVEF), 326-346 (FLQF…YLYM), 415-435 (VPSL…VDAL), 447-467 (IIHD…VPFI), 481-501 (EVSW…YVIF), and 561-581 (ACGF…MLLV). N6-acetyllysine occurs at positions 594 and 601.

This sequence belongs to the ERG4/ERG24 family. Interacts with CBX5. Interacts with DNA. Interaction with DNA is sequence independent with higher affinity for supercoiled and relaxed circular DNA than linear DNA. Interacts with lamin B. Interacts with CLNK. Interacts with TMEM147; promoting LBR localization to the nucleus inner membrane. Post-translationally, phosphorylated by CDK1 in mitosis when the inner nuclear membrane breaks down into vesicles that dissociate from the lamina and the chromatin. It is phosphorylated by different protein kinases in interphase when the membrane is associated with these structures. Phosphorylation of LBR and HP1 proteins may be responsible for some of the alterations in chromatin organization and nuclear structure which occur at various times during the cell cycle. Phosphorylated by SRPK1. In late anaphase LBR is dephosphorylated, probably by PP1 and/or PP2A, allowing reassociation with chromatin.

It localises to the nucleus inner membrane. The protein localises to the nucleus. The protein resides in the cytoplasm. Its subcellular location is the endoplasmic reticulum membrane. The enzyme catalyses 5alpha-cholest-8,14-dien-3beta-ol + NADPH + H(+) = 5alpha-cholest-8-en-3beta-ol + NADP(+). It carries out the reaction 4,4-dimethyl-5alpha-cholesta-8,24-dien-3beta-ol + NADP(+) = 4,4-dimethyl-5alpha-cholesta-8,14,24-trien-3beta-ol + NADPH + H(+). It catalyses the reaction 4,4-dimethyl-8,14-cholestadien-3beta-ol + NADPH + H(+) = 4,4-dimethyl-5alpha-cholest-8-en-3beta-ol + NADP(+). Its pathway is steroid biosynthesis; cholesterol biosynthesis. Its function is as follows. Catalyzes the reduction of the C14-unsaturated bond of lanosterol, as part of the metabolic pathway leading to cholesterol biosynthesis. Plays a critical role in myeloid cell cholesterol biosynthesis which is essential to both myeloid cell growth and functional maturation. Mediates the activation of NADPH oxidases, perhaps by maintaining critical levels of cholesterol required for membrane lipid raft formation during neutrophil differentiation. Anchors the lamina and the heterochromatin to the inner nuclear membrane. The chain is Delta(14)-sterol reductase LBR (LBR) from Pongo abelii (Sumatran orangutan).